A 510-amino-acid polypeptide reads, in one-letter code: Inositol-3-phosphate synthase (510 aa).

NAD(+) contacts are provided by Gly-70, Gly-71, Asn-72, Asn-73, Asp-143, Ile-180, Gln-190, Arg-193, Thr-230, Ala-231, Asn-232, Thr-233, Gly-281, Ser-282, Asp-306, Ser-309, Asn-340, Asn-341, Asp-342, Lys-355, Gly-393, Asp-394, Asp-422, and Ser-423.

The protein belongs to the myo-inositol 1-phosphate synthase family. The cofactor is NAD(+).

It localises to the cytoplasm. The protein resides in the cytosol. It is found in the nucleus. It catalyses the reaction D-glucose 6-phosphate = 1D-myo-inositol 3-phosphate. It participates in polyol metabolism; myo-inositol biosynthesis; myo-inositol from D-glucose 6-phosphate: step 1/2. Key enzyme in myo-inositol biosynthesis pathway that catalyzes the conversion of glucose 6-phosphate to 1-myo-inositol 1-phosphate in a NAD-dependent manner. In Zea mays (Maize), this protein is Inositol-3-phosphate synthase.